We begin with the raw amino-acid sequence, 129 residues long: Histone H2A-III (129 aa).

The disordered stretch occupies residues 1–22; that stretch reads MSGRGKQGGKARAKAKSRSSRA. Ser-2 carries the N-acetylserine modification. Ser-2 carries the phosphoserine modification. Lys-6 is modified (N6-(2-hydroxyisobutyryl)lysine). 2 positions are modified to N6-acetyllysine: Lys-6 and Lys-10. Residues 7–19 show a composition bias toward basic residues; the sequence is QGGKARAKAKSRS. An N6-(2-hydroxyisobutyryl)lysine; alternate modification is found at Lys-10. Lys-10 bears the N6-lactoyllysine; alternate mark. The residue at position 10 (Lys-10) is an N6-succinyllysine. Residues Lys-14 and Lys-16 each participate in a glycyl lysine isopeptide (Lys-Gly) (interchain with G-Cter in ubiquitin) cross-link. Lys-37 is subject to N6-(2-hydroxyisobutyryl)lysine; alternate. 2 positions are modified to N6-(2-hydroxyisobutyryl)lysine: Lys-75 and Lys-76. Lys-96 carries the N6-(2-hydroxyisobutyryl)lysine; alternate modification. N6-succinyllysine is present on Lys-96. Lys-96 is subject to N6-glutaryllysine; alternate. At Lys-100 the chain carries N6-glutaryllysine. An N5-methylglutamine modification is found at Gln-105. The residue at position 119 (Lys-119) is an N6-(2-hydroxyisobutyryl)lysine; alternate. Lys-119 and Lys-120 each carry N6-glutaryllysine; alternate. Lys-120 is covalently cross-linked (Glycyl lysine isopeptide (Lys-Gly) (interchain with G-Cter in ubiquitin)).

This sequence belongs to the histone H2A family. As to quaternary structure, the nucleosome is a histone octamer containing two molecules each of H2A, H2B, H3 and H4 assembled in one H3-H4 heterotetramer and two H2A-H2B heterodimers. The octamer wraps approximately 147 bp of DNA. Post-translationally, monoubiquitination of Lys-120 (H2AK119Ub) gives a specific tag for epigenetic transcriptional repression. Following DNA double-strand breaks (DSBs), it is ubiquitinated through 'Lys-63' linkage of ubiquitin moieties, leading to the recruitment of repair proteins to sites of DNA damage. H2AK119Ub and ionizing radiation-induced 'Lys-63'-linked ubiquitination are distinct events. In terms of processing, phosphorylation on Ser-2 is enhanced during mitosis. Phosphorylation on Ser-2 directly represses transcription. Glutamine methylation at Gln-105 (H2AQ104me) by FBL is specifically dedicated to polymerase I. It is present at 35S ribosomal DNA locus and impairs binding of the FACT complex.

The protein localises to the nucleus. It localises to the chromosome. Its function is as follows. Core component of nucleosome. Nucleosomes wrap and compact DNA into chromatin, limiting DNA accessibility to the cellular machineries which require DNA as a template. Histones thereby play a central role in transcription regulation, DNA repair, DNA replication and chromosomal stability. DNA accessibility is regulated via a complex set of post-translational modifications of histones, also called histone code, and nucleosome remodeling. The protein is Histone H2A-III of Gallus gallus (Chicken).